A 368-amino-acid polypeptide reads, in one-letter code: MSEAENKLPFIPEEWSNAASSVSCSSLQPVIALVCGPKNSGKSTFSRNLVEVLLQRYKRVAYLDTDVGQPEFTAPGFLSLTIVDKSILESDWTVPCVKTPERCFFYGDVSSKRDPKAYLRYVYTLFDYYQLHFCKSSENKTELPLVINTPGWVKGIGYELLVDVLRYVSPSHVVKINISAYNKNLPAGLFWLDGNDDETAHLIEIQSAYQDRYNQSILIHKDARLMRDMRIIAYFRQCFKGKEVNTIKELTHELASHIPYEVPISSLTINHLHCQIPSSEVYYSLNASIVGLGISTEVFEDLPSCVGLGIVRGIDTERGILYVITPVPENLVEKVDLLLQGYIQLPTCLLEVKDYRSPYLSANVLAST.

36–43 is a binding site for ATP; it reads GPKNSGKS.

Belongs to the Clp1 family. NOL9/GRC3 subfamily.

Its subcellular location is the nucleus. It is found in the nucleolus. Functionally, polynucleotide 5'-kinase involved in rRNA processing. The protein is Polynucleotide 5'-hydroxyl-kinase NOL9 of Arabidopsis thaliana (Mouse-ear cress).